The following is a 77-amino-acid chain: MKNYSKNATYLITVLLFSFVTMLLIIPSKCEAVSNDMQPLEARTADLVQQPRYIIDVPPRCPPGSKFVHKRCRVIVP.

Residues 1-32 form the signal peptide; the sequence is MKNYSKNATYLITVLLFSFVTMLLIIPSKCEA. The propeptide occupies 33–52; it reads VSNDMQPLEARTADLVQQPR. Cys61 and Cys72 are disulfide-bonded. Residue Pro77 is modified to Proline amide.

The protein belongs to the secapin family. In terms of tissue distribution, expressed by the venom gland.

The protein localises to the secreted. Functionally, serine protease inhibitor which exhibits antifibrinolytic, antielastolytic and antimicrobial activities. Displays antimicrobial activity against bacteria and fungi. Likely functions in the innate immune response to microbial infection and possibly in the venom, as an antifibrinolytic agent. Induces hyperalgesia and edema mediated by leukotrienes when injected into mice. Does not induce hemolytic activity, mast cell degranulation, or chemotactic activity for polymorphonucleated leukocytes (PMNL). The sequence is that of Secapin-2 from Apis mellifera (Honeybee).